Here is an 867-residue protein sequence, read N- to C-terminus: Alanine--tRNA ligase (867 aa).

Zn(2+) is bound by residues H559, H563, C661, and H665.

Belongs to the class-II aminoacyl-tRNA synthetase family. Zn(2+) serves as cofactor.

The protein localises to the cytoplasm. The catalysed reaction is tRNA(Ala) + L-alanine + ATP = L-alanyl-tRNA(Ala) + AMP + diphosphate. Functionally, catalyzes the attachment of alanine to tRNA(Ala) in a two-step reaction: alanine is first activated by ATP to form Ala-AMP and then transferred to the acceptor end of tRNA(Ala). Also edits incorrectly charged Ser-tRNA(Ala) and Gly-tRNA(Ala) via its editing domain. The polypeptide is Alanine--tRNA ligase (Aquifex aeolicus (strain VF5)).